A 251-amino-acid polypeptide reads, in one-letter code: 2,3-bisphosphoglycerate-dependent phosphoglycerate mutase (251 aa).

Residues 11–18 (RHGESDWN), 24–25 (TG), arginine 63, 90–93 (ERHY), lysine 101, 117–118 (RR), and 184–185 (GN) contribute to the substrate site. Catalysis depends on histidine 12, which acts as the Tele-phosphohistidine intermediate. The active-site Proton donor/acceptor is the glutamate 90.

This sequence belongs to the phosphoglycerate mutase family. BPG-dependent PGAM subfamily.

It carries out the reaction (2R)-2-phosphoglycerate = (2R)-3-phosphoglycerate. The protein operates within carbohydrate degradation; glycolysis; pyruvate from D-glyceraldehyde 3-phosphate: step 3/5. In terms of biological role, catalyzes the interconversion of 2-phosphoglycerate and 3-phosphoglycerate. This is 2,3-bisphosphoglycerate-dependent phosphoglycerate mutase from Mycobacterium ulcerans (strain Agy99).